Consider the following 234-residue polypeptide: Segregation and condensation protein A (234 aa).

Belongs to the ScpA family. As to quaternary structure, component of a cohesin-like complex composed of ScpA, ScpB and the Smc homodimer, in which ScpA and ScpB bind to the head domain of Smc. The presence of the three proteins is required for the association of the complex with DNA.

It is found in the cytoplasm. In terms of biological role, participates in chromosomal partition during cell division. May act via the formation of a condensin-like complex containing Smc and ScpB that pull DNA away from mid-cell into both cell halves. The chain is Segregation and condensation protein A from Streptococcus pyogenes serotype M6 (strain ATCC BAA-946 / MGAS10394).